Here is a 121-residue protein sequence, read N- to C-terminus: Large ribosomal subunit protein bL19 (121 aa).

The protein belongs to the bacterial ribosomal protein bL19 family.

In terms of biological role, this protein is located at the 30S-50S ribosomal subunit interface and may play a role in the structure and function of the aminoacyl-tRNA binding site. This Chlorobium phaeobacteroides (strain BS1) protein is Large ribosomal subunit protein bL19.